The chain runs to 197 residues: MAVNKVPVLKRCRSLGLEPSYLGYDKKSRRNLTRANRKVSEYGLQLREKQKAKFIYGVLEKPFRNYYKKADQMKGLTGLNLMTILESRIDNVIFRLGFARTRKEARQIVDHKFVTVNGKVVNIPSYLVKAGDVIEIKESKKNTQRMKDIVEVAGGRIVPEWLDVDAEKLQGTVKDLPTREQIDVPVDEMLIVELYSK.

The region spanning 87–147 (SRIDNVIFRL…ESKKNTQRMK (61 aa)) is the S4 RNA-binding domain.

Belongs to the universal ribosomal protein uS4 family. As to quaternary structure, part of the 30S ribosomal subunit. Contacts protein S5. The interaction surface between S4 and S5 is involved in control of translational fidelity.

One of the primary rRNA binding proteins, it binds directly to 16S rRNA where it nucleates assembly of the body of the 30S subunit. Its function is as follows. With S5 and S12 plays an important role in translational accuracy. The polypeptide is Small ribosomal subunit protein uS4 (Agathobacter rectalis (strain ATCC 33656 / DSM 3377 / JCM 17463 / KCTC 5835 / VPI 0990) (Eubacterium rectale)).